Consider the following 409-residue polypeptide: Argininosuccinate synthase (409 aa).

An ATP-binding site is contributed by 10-18 (AYSGGLDTS). Tyr-87 contacts L-citrulline. Gly-117 contributes to the ATP binding site. L-aspartate is bound by residues Thr-119, Asn-123, and Asp-124. Asn-123 contributes to the L-citrulline binding site. L-citrulline contacts are provided by Arg-127, Ser-175, Ser-184, Glu-260, and Tyr-272.

The protein belongs to the argininosuccinate synthase family. Type 1 subfamily. In terms of assembly, homotetramer.

It is found in the cytoplasm. The catalysed reaction is L-citrulline + L-aspartate + ATP = 2-(N(omega)-L-arginino)succinate + AMP + diphosphate + H(+). It participates in amino-acid biosynthesis; L-arginine biosynthesis; L-arginine from L-ornithine and carbamoyl phosphate: step 2/3. The sequence is that of Argininosuccinate synthase from Rubrobacter xylanophilus (strain DSM 9941 / JCM 11954 / NBRC 16129 / PRD-1).